The sequence spans 418 residues: Tyrosine--tRNA ligase (418 aa).

Tyr-34 serves as a coordination point for L-tyrosine. The 'HIGH' region motif lies at Pro-39–His-48. The L-tyrosine site is built by Tyr-169 and Gln-173. Positions Lys-229–Ser-233 match the 'KMSKS' region motif. Residue Lys-232 coordinates ATP. One can recognise an S4 RNA-binding domain in the interval His-352–Tyr-418.

Belongs to the class-I aminoacyl-tRNA synthetase family. TyrS type 1 subfamily. As to quaternary structure, homodimer.

Its subcellular location is the cytoplasm. It carries out the reaction tRNA(Tyr) + L-tyrosine + ATP = L-tyrosyl-tRNA(Tyr) + AMP + diphosphate + H(+). In terms of biological role, catalyzes the attachment of tyrosine to tRNA(Tyr) in a two-step reaction: tyrosine is first activated by ATP to form Tyr-AMP and then transferred to the acceptor end of tRNA(Tyr). This chain is Tyrosine--tRNA ligase, found in Streptococcus pyogenes serotype M49 (strain NZ131).